Here is a 235-residue protein sequence, read N- to C-terminus: Orotidine 5'-phosphate decarboxylase (235 aa).

Substrate-binding positions include Asp-12, Lys-34, 61 to 70 (DLKFHDIPNT), Thr-121, Arg-182, Gln-191, Gly-211, and Arg-212. The active-site Proton donor is Lys-63.

It belongs to the OMP decarboxylase family. Type 1 subfamily. As to quaternary structure, homodimer.

It catalyses the reaction orotidine 5'-phosphate + H(+) = UMP + CO2. It participates in pyrimidine metabolism; UMP biosynthesis via de novo pathway; UMP from orotate: step 2/2. In terms of biological role, catalyzes the decarboxylation of orotidine 5'-monophosphate (OMP) to uridine 5'-monophosphate (UMP). This Marinomonas sp. (strain MWYL1) protein is Orotidine 5'-phosphate decarboxylase.